The following is a 118-amino-acid chain: UPF0102 protein DICTH_1420 (118 aa).

It belongs to the UPF0102 family.

This is UPF0102 protein DICTH_1420 from Dictyoglomus thermophilum (strain ATCC 35947 / DSM 3960 / H-6-12).